The chain runs to 300 residues: Acetaldehyde dehydrogenase (300 aa).

Position 11–14 (serine 11–isoleucine 14) interacts with NAD(+). Cysteine 129 serves as the catalytic Acyl-thioester intermediate. NAD(+)-binding positions include serine 160–asparagine 168 and asparagine 271.

It belongs to the acetaldehyde dehydrogenase family.

The catalysed reaction is acetaldehyde + NAD(+) + CoA = acetyl-CoA + NADH + H(+). This Pseudoalteromonas translucida (strain TAC 125) protein is Acetaldehyde dehydrogenase (mhpF).